Reading from the N-terminus, the 347-residue chain is Fructose-1,6-bisphosphatase class 1 2 (347 aa).

Mg(2+)-binding residues include glutamate 92, aspartate 111, leucine 113, and aspartate 114. Substrate is bound by residues 114–117 (DGSS) and asparagine 202. Glutamate 274 is a binding site for Mg(2+).

The protein belongs to the FBPase class 1 family. As to quaternary structure, homotetramer. It depends on Mg(2+) as a cofactor.

It is found in the cytoplasm. The catalysed reaction is beta-D-fructose 1,6-bisphosphate + H2O = beta-D-fructose 6-phosphate + phosphate. It participates in carbohydrate biosynthesis; Calvin cycle. The polypeptide is Fructose-1,6-bisphosphatase class 1 2 (Bradyrhizobium sp. (strain BTAi1 / ATCC BAA-1182)).